The sequence spans 313 residues: Protein FixB (313 aa).

Position 255-283 (255-283) interacts with FAD; the sequence is LYLAVGISGQIQHMVGANASQTIFAINKD.

This sequence belongs to the ETF alpha-subunit/FixB family. As to quaternary structure, heterodimer of FixA and FixB.

It functions in the pathway amine and polyamine metabolism; carnitine metabolism. Required for anaerobic carnitine reduction. May bring reductant to CaiA. This chain is Protein FixB, found in Escherichia coli O81 (strain ED1a).